Here is a 140-residue protein sequence, read N- to C-terminus: Large-conductance mechanosensitive channel (140 aa).

2 helical membrane-spanning segments follow: residues 11–31 (FAMR…GAFG) and 82–102 (GNFI…FLLV).

This sequence belongs to the MscL family. In terms of assembly, homopentamer.

It localises to the cell inner membrane. Its function is as follows. Channel that opens in response to stretch forces in the membrane lipid bilayer. May participate in the regulation of osmotic pressure changes within the cell. In Parabacteroides distasonis (strain ATCC 8503 / DSM 20701 / CIP 104284 / JCM 5825 / NCTC 11152), this protein is Large-conductance mechanosensitive channel.